The following is a 175-amino-acid chain: Alpha-crystallin B chain (175 aa).

Residue M1 is modified to N-acetylmethionine. Phosphoserine is present on residues S19, S45, and S59. One can recognise a sHSP domain in the interval 56-164 (RAPSWIDTGL…PERTIPITRE (109 aa)). A Zn(2+)-binding site is contributed by H83. An N6-acetyllysine modification is found at K92. H104, E106, H111, and H119 together coordinate Zn(2+). The disordered stretch occupies residues 145–175 (VNGPRKQVSGPERTIPITREEKPAVAAAPKK). K166 is modified (N6-acetyllysine).

It belongs to the small heat shock protein (HSP20) family. Heteromer composed of three CRYAA and one CRYAB subunits. Aggregates with homologous proteins, including the small heat shock protein HSPB1, to form large heteromeric complexes. Inter-subunit bridging via zinc ions enhances stability, which is crucial as there is no protein turn over in the lens. Interacts with HSPBAP1. Interacts with TTN/titin. Interacts with TMEM109; in the cellular response to DNA damage. Interacts with DES; binds rapidly during early stages of DES filament assembly and a reduced binding seen in the later stages. Interacts with TMED10; the interaction mediates the translocation from the cytoplasm into the ERGIC (endoplasmic reticulum-Golgi intermediate compartment) and thereby secretion. Interacts with ATP6V1A and with MTOR, forming a ternary complex. Abundantly expressed in the lens of the eye. Expressed in ventricular cardiomyocytes of the heart. Also expressed in skeletal muscle and the kidney.

It localises to the cytoplasm. It is found in the cytosol. The protein resides in the nucleus. The protein localises to the secreted. Its subcellular location is the lysosome. Functionally, may contribute to the transparency and refractive index of the lens. Has chaperone-like activity, preventing aggregation of various proteins under a wide range of stress conditions. In lens epithelial cells, stabilizes the ATP6V1A protein, preventing its degradation by the proteasome. The chain is Alpha-crystallin B chain from Mus musculus (Mouse).